Consider the following 322-residue polypeptide: F-actin-capping protein subunit beta (322 aa).

Belongs to the F-actin-capping protein beta subunit family. As to quaternary structure, component of the F-actin capping complex, composed of a heterodimer of an alpha and a beta subunit.

Its subcellular location is the cytoplasm. The protein localises to the cytoskeleton. The protein resides in the actin patch. Its function is as follows. F-actin-capping proteins bind in a Ca(2+)-independent manner to the fast growing ends of actin filaments (barbed end) thereby blocking the exchange of subunits at these ends. Unlike other capping proteins (such as gelsolin and severin), these proteins do not sever actin filaments. The polypeptide is F-actin-capping protein subunit beta (cap2) (Aspergillus fumigatus (strain ATCC MYA-4609 / CBS 101355 / FGSC A1100 / Af293) (Neosartorya fumigata)).